The primary structure comprises 530 residues: Phosphoenolpyruvate carboxykinase (ATP) (530 aa).

3 residues coordinate substrate: arginine 57, tyrosine 193, and lysine 199. ATP contacts are provided by residues lysine 199, histidine 218, and 234–242 (GLSGTGKTT). Positions 199 and 218 each coordinate Mn(2+). A Mn(2+)-binding site is contributed by aspartate 255. Positions 283, 320, and 445 each coordinate ATP. Arginine 320 provides a ligand contact to substrate.

The protein belongs to the phosphoenolpyruvate carboxykinase (ATP) family. The cofactor is Mn(2+).

The protein localises to the cytoplasm. The enzyme catalyses oxaloacetate + ATP = phosphoenolpyruvate + ADP + CO2. It participates in carbohydrate biosynthesis; gluconeogenesis. In terms of biological role, involved in the gluconeogenesis. Catalyzes the conversion of oxaloacetate (OAA) to phosphoenolpyruvate (PEP) through direct phosphoryl transfer between the nucleoside triphosphate and OAA. This Leptospira interrogans serogroup Icterohaemorrhagiae serovar copenhageni (strain Fiocruz L1-130) protein is Phosphoenolpyruvate carboxykinase (ATP).